The primary structure comprises 395 residues: NAD(P)H-quinone oxidoreductase subunit H, chloroplastic (395 aa).

The protein belongs to the complex I 49 kDa subunit family. In terms of assembly, NDH is composed of at least 16 different subunits, 5 of which are encoded in the nucleus.

It is found in the plastid. Its subcellular location is the chloroplast thylakoid membrane. The enzyme catalyses a plastoquinone + NADH + (n+1) H(+)(in) = a plastoquinol + NAD(+) + n H(+)(out). It carries out the reaction a plastoquinone + NADPH + (n+1) H(+)(in) = a plastoquinol + NADP(+) + n H(+)(out). In terms of biological role, NDH shuttles electrons from NAD(P)H:plastoquinone, via FMN and iron-sulfur (Fe-S) centers, to quinones in the photosynthetic chain and possibly in a chloroplast respiratory chain. The immediate electron acceptor for the enzyme in this species is believed to be plastoquinone. Couples the redox reaction to proton translocation, and thus conserves the redox energy in a proton gradient. The chain is NAD(P)H-quinone oxidoreductase subunit H, chloroplastic from Chloranthus spicatus (Chulantree).